Consider the following 1017-residue polypeptide: Adhesion G-protein coupled receptor G2 (1017 aa).

Residues 1 to 37 (MVFSVRQCGHVGRTEEVLLTFKIFLVIICLHVVLVTS) form the signal peptide. The Extracellular segment spans residues 38–627 (LEEDTDNSSL…TSVLPAQMMA (590 aa)). N-linked (GlcNAc...) asparagine glycans are attached at residues asparagine 44, asparagine 85, asparagine 99, asparagine 111, asparagine 117, asparagine 144, asparagine 162, asparagine 186, and asparagine 194. Positions 301 to 366 (PLSPQPSAPI…NTTSAPPVQT (66 aa)) are disordered. The span at 308-320 (APIASSPAIDMPP) shows a compositional bias: low complexity. Polar residues-rich tracts occupy residues 321–335 (QSETISSPMPQTHVS) and 344–366 (SFSSPTVSAPANVNTTSAPPVQT). Asparagine 357, asparagine 370, asparagine 435, asparagine 438, asparagine 456, asparagine 461, asparagine 528, asparagine 542, asparagine 547, asparagine 551, and asparagine 597 each carry an N-linked (GlcNAc...) asparagine glycan. In terms of domain architecture, GAIN-B spans 462-619 (TTTFVAQDPA…GVLLDLSRTS (158 aa)). Disulfide bonds link cysteine 570–cysteine 601 and cysteine 589–cysteine 603. The segment at 570–619 (CVFWDLGRNGGRGGWSDNGCSVKDRRLNETICTCSHLTSFGVLLDLSRTS) is GPS. The tract at residues 608–619 (SFGVLLDLSRTS) is stachel. The helical transmembrane segment at 628–648 (LTFITYIGCGLSSIFLSVTLV) threads the bilayer. Topologically, residues 649–667 (TYIAFEKIRRDYPSKILIQ) are cytoplasmic. A helical transmembrane segment spans residues 668 to 688 (LCAALLLLNLVFLLDSWIALY). At 689 to 693 (KMQGL) the chain is on the extracellular side. Residues 694 to 714 (CISVAVFLHYFLLVSFTWMGL) form a helical membrane-spanning segment. A disulfide bridge connects residues cysteine 694 and cysteine 778. The Cytoplasmic segment spans residues 715–737 (EAFHMYLALVKVFNTYIRKYILK). The helical transmembrane segment at 738 to 758 (FCIVGWGVPAVVVTIILTISP) threads the bilayer. Over 759 to 789 (DNYGLGSYGKFPNGSPDDFCWINNNAVFYIT) the chain is Extracellular. A helical membrane pass occupies residues 790–810 (VVGYFCVIFLLNVSMFIVVLV). The Cytoplasmic segment spans residues 811–834 (QLCRIKKKKQLGAQRKTSIQDLRS). Residues 835 to 855 (IAGLTFLLGITWGFAFFAWGP) traverse the membrane as a helical segment. At 856–857 (VN) the chain is on the extracellular side. Residue asparagine 857 is glycosylated (N-linked (GlcNAc...) asparagine). The chain crosses the membrane as a helical span at residues 858 to 878 (VTFMYLFAIFNTLQGFFIFIF). Asparagine 868 lines the 3beta-hydroxyandrost-5-en-17-one pocket. Residues 879-1017 (YCVAKENVRK…RGSLHFIEQM (139 aa)) are Cytoplasmic-facing. Residues 918–939 (QTVNQGVSSSSNSLQSSSNSTN) are disordered. Serine 1010 is modified (phosphoserine).

The protein belongs to the G-protein coupled receptor 2 family. Adhesion G-protein coupled receptor (ADGR) subfamily. In terms of assembly, heterodimer of 2 chains generated by proteolytic processing; the large extracellular N-terminal fragment and the membrane-bound C-terminal fragment predominantly remain associated and non-covalently linked. Interacts with CFTR. Proteolytically cleaved into 2 subunits, an extracellular subunit and a seven-transmembrane subunit. In terms of processing, highly glycosylated. In terms of tissue distribution, epididymis-specific expression (at protein level). Both subunits are associated with apical membranes of efferent ductule and proximal epididymal duct epithelia. Mainly expressed in the nonciliated principal cells of the proximal excurrent ducts. Specifically over-expressed in Ewing sarcomas but also up-regulated in a number of carcinomas derived from prostate, kidney or lung.

It localises to the apical cell membrane. With respect to regulation, forms a heterodimer of 2 chains generated by proteolytic processing that remain associated through non-covalent interactions mediated by the GAIN-B domain. In the inactivated receptor, the Stachel sequence (also named stalk) is embedded in the GAIN-B domain, where it adopts a beta-strand conformation. On activation, the Stachel moves into the 7 transmembrane region and adopts a twisted hook-shaped configuration that forms contacts within the receptor, leading to coupling of a G-alpha protein, which activates signaling. The cleaved GAIN-B and N-terminal domains can then dissociate from the rest of the receptor. Deoxycorticosterone (DOC) acts as an antagonist of ADGRG2. In terms of biological role, adhesion G-protein coupled receptor (aGPCR) for steroid hormones, such as dehydroepiandrosterone (DHEA; also named 3beta-hydroxyandrost-5-en-17-one) and androstenedione. Involved in a signal transduction pathway controlling epididymal function and male fertility. Ligand binding causes a conformation change that triggers signaling via guanine nucleotide-binding proteins (G proteins) and modulates the activity of downstream effectors, such as adenylate cyclase. ADGRG2 is coupled to G(s) G proteins and mediates activation of adenylate cyclase activity. Also able to couple with G(q) G proteins in vitro. Together with CFTR, required to promote fluid reabsorption within efferent ductule. In Homo sapiens (Human), this protein is Adhesion G-protein coupled receptor G2.